The following is a 122-amino-acid chain: Large ribosomal subunit protein uL14 (122 aa).

It belongs to the universal ribosomal protein uL14 family. As to quaternary structure, part of the 50S ribosomal subunit. Forms a cluster with proteins L3 and L19. In the 70S ribosome, L14 and L19 interact and together make contacts with the 16S rRNA in bridges B5 and B8.

Binds to 23S rRNA. Forms part of two intersubunit bridges in the 70S ribosome. The polypeptide is Large ribosomal subunit protein uL14 (Lachnospira eligens (strain ATCC 27750 / DSM 3376 / VPI C15-48 / C15-B4) (Eubacterium eligens)).